The primary structure comprises 597 residues: 2-isopropylmalate synthase (597 aa).

The interval 1 to 80 is unknown; sequence MQLDIDRLVA…QKNESLERTE (80 aa). The Pyruvate carboxyltransferase domain occupies 87 to 349; it reads VIIFDTTLRD…ETGIDTTQIV (263 aa). The interval 87-349 is 2-isopropylmalate synthase; the sequence is VIIFDTTLRD…ETGIDTTQIV (263 aa). 4 residues coordinate Mn(2+): Asp-96, His-284, His-286, and Asn-320. A regulatory domain region spans residues 475–597; the sequence is KFISQKISTE…KPKAQGSGTI (123 aa).

It belongs to the alpha-IPM synthase/homocitrate synthase family. LeuA type 1 subfamily. Homodimer. It depends on Mn(2+) as a cofactor.

It localises to the cytoplasm. It catalyses the reaction 3-methyl-2-oxobutanoate + acetyl-CoA + H2O = (2S)-2-isopropylmalate + CoA + H(+). It participates in amino-acid biosynthesis; L-leucine biosynthesis; L-leucine from 3-methyl-2-oxobutanoate: step 1/4. Functionally, catalyzes the condensation of the acetyl group of acetyl-CoA with 3-methyl-2-oxobutanoate (2-ketoisovalerate) to form 3-carboxy-3-hydroxy-4-methylpentanoate (2-isopropylmalate). The protein is 2-isopropylmalate synthase of Neisseria gonorrhoeae (strain ATCC 700825 / FA 1090).